The sequence spans 348 residues: Probable dual-specificity RNA methyltransferase RlmN (348 aa).

The active-site Proton acceptor is the Glu93. The 235-residue stretch at 99–333 (TEKRLTACLS…VSLRKSRGSD (235 aa)) folds into the Radical SAM core domain. Cys106 and Cys338 form a disulfide bridge. The [4Fe-4S] cluster site is built by Cys113, Cys117, and Cys120. S-adenosyl-L-methionine contacts are provided by residues 160–161 (GE), Ser190, 219–221 (SLH), and Asn295. Residue Cys338 is the S-methylcysteine intermediate of the active site.

It belongs to the radical SAM superfamily. RlmN family. [4Fe-4S] cluster is required as a cofactor.

Its subcellular location is the cytoplasm. The catalysed reaction is adenosine(2503) in 23S rRNA + 2 reduced [2Fe-2S]-[ferredoxin] + 2 S-adenosyl-L-methionine = 2-methyladenosine(2503) in 23S rRNA + 5'-deoxyadenosine + L-methionine + 2 oxidized [2Fe-2S]-[ferredoxin] + S-adenosyl-L-homocysteine. It carries out the reaction adenosine(37) in tRNA + 2 reduced [2Fe-2S]-[ferredoxin] + 2 S-adenosyl-L-methionine = 2-methyladenosine(37) in tRNA + 5'-deoxyadenosine + L-methionine + 2 oxidized [2Fe-2S]-[ferredoxin] + S-adenosyl-L-homocysteine. Specifically methylates position 2 of adenine 2503 in 23S rRNA and position 2 of adenine 37 in tRNAs. The polypeptide is Probable dual-specificity RNA methyltransferase RlmN (Prochlorococcus marinus (strain MIT 9515)).